Reading from the N-terminus, the 379-residue chain is Cobalt-precorrin-5B C(1)-methyltransferase (379 aa).

Belongs to the CbiD family.

It catalyses the reaction Co-precorrin-5B + S-adenosyl-L-methionine = Co-precorrin-6A + S-adenosyl-L-homocysteine. It participates in cofactor biosynthesis; adenosylcobalamin biosynthesis; cob(II)yrinate a,c-diamide from sirohydrochlorin (anaerobic route): step 6/10. Its function is as follows. Catalyzes the methylation of C-1 in cobalt-precorrin-5B to form cobalt-precorrin-6A. This Klebsiella pneumoniae subsp. pneumoniae (strain ATCC 700721 / MGH 78578) protein is Cobalt-precorrin-5B C(1)-methyltransferase.